Consider the following 130-residue polypeptide: MAQVQYYGTGRRKSSVARVRLVPGEGRIIVNGRDIRDYVPYESLVEVVKQPLVLTETFGSYDVLVNVSGGGFTGQAGAIRHGIARALLQVDPEYRQTLKRAGLLTRDSRVKERKKYGLKGARRAPQFSKR.

The protein belongs to the universal ribosomal protein uS9 family.

The chain is Small ribosomal subunit protein uS9 from Anoxybacillus flavithermus (strain DSM 21510 / WK1).